The primary structure comprises 97 residues: Lipolysis-activating peptide 1-alpha chain (97 aa).

The signal sequence occupies residues 1–21 (MNITLFCSVFILISLAGLSVS). The LCN-type CS-alpha/beta domain occupies 25-88 (PGNYPMSLYG…FWAAHKNHCK (64 aa)). Intrachain disulfides connect C39-C62, C48-C67, and C52-C69.

It belongs to the long (3 C-C) scorpion toxin superfamily. Monomer (edited version) and heterodimer (non-edited version) of this alpha chain and a beta chain (AC D9U2A2). In terms of tissue distribution, expressed by the venom gland.

It localises to the secreted. Functionally, the heterodimer non-edited LVP1 induces lipolysis in rat adipocytes. Induction of lipolysis by LVP1 appears to be mediated through the beta-2 adrenergic receptor pathway (ADRB2). The edited BmKBTx-like, similar to beta-toxins, may modulate voltage-gated sodium channels (Nav) and may block voltage-gated potassium channels (Kv). This chain is Lipolysis-activating peptide 1-alpha chain, found in Lychas mucronatus (Chinese swimming scorpion).